Here is a 493-residue protein sequence, read N- to C-terminus: MENLSERFNVLQDQLMNIYESAAETLESQIEHWQILRKEAVLLYFARRKGVTRIGYQPVPTLAVSEAKAKEAIGMVLQLQSLQKSEYGTEPWSLVDTSAETYRSAPENYFKKGPMPIEVIYDKDADNANLYTMWKFVYYVDEDDNWHKSESGVNHTGLYFMQGNFRHYYVLFADDARKYSATGHWEVKVNKETVFTPVTSSTPPDSPGGQRDPNTSSKTPTTTTDSASRLSPTASREQSQQTNTKGRRYERRPSSRTRRQTQTRQKRSRSKSKSRSRSRSRSLSSNRRSRSKSRRKASTTRGRGRGSPTATSDQSSRSPSATSSTTSLRSRGSSRVGRSRGGRSRVGRSRGRGKRSRESPSPTNTKRSRRQSGSSRLHGVSADAVGTSVHTVSGRNTGRLGRLLEEALDPPVILVRGEPNTLRSFRNRAKHMYRGLFSSFSTAWSWVAGDGIERLGRTRMLISFVSFNQRKHFDDTVRYPKGVDRSFGSFDSL.

The segment at 1–201 is transactivation domain; sequence MENLSERFNV…ETVFTPVTSS (201 aa). A disordered region spans residues 196–395; sequence TPVTSSTPPD…GTSVHTVSGR (200 aa). Residues 215 to 228 are compositionally biased toward low complexity; the sequence is TSSKTPTTTTDSAS. Polar residues predominate over residues 229 to 244; it reads RLSPTASREQSQQTNT. Basic residues-rich tracts occupy residues 245 to 280 and 287 to 304; these read KGRRYERRPSSRTRRQTQTRQKRSRSKSKSRSRSRS and RRSRSKSRRKASTTRGRG. Residues 315-336 are compositionally biased toward low complexity; it reads SSRSPSATSSTTSLRSRGSSRV. The segment covering 337-355 has biased composition (basic residues); it reads GRSRGGRSRVGRSRGRGKR. Residues 409-493 form a DNA-binding domain region; it reads DPPVILVRGE…DRSFGSFDSL (85 aa).

The protein belongs to the papillomaviridae E2 protein family. Binds DNA as homodimer. Interacts with protein E1; this interaction greatly increases E1 DNA-binding activity. Interacts with protein L1; this interaction enhances E2-dependent replication and transcription activation. Interacts with protein L2; this interaction inhibits E2 transcriptional activity but not DNA replication function E2. Interacts with protein E7; this interaction inhibits E7 oncogenic activity. Interacts with host TAF1; this interaction modulates E2-dependent transcriptional regulation. Interacts with host BRD4; this interaction mediates E2 transcriptional activation function. Additionally, the interaction with host BRD4 on mitotic chromosomes mediates tethering of the viral genome. Interacts with host TOPBP1; this interaction is required for optimal viral DNA replication. Post-translationally, phosphorylated.

The protein resides in the host nucleus. Plays a role in the initiation of viral DNA replication. A dimer of E2 interacts with a dimer of E1 in order to improve specificity of E1 DNA binding activity. Once the complex recognizes and binds DNA at specific sites, the E2 dimer is removed from DNA. E2 also regulates viral transcription through binding to the E2RE response element (5'-ACCNNNNNNGGT-3') present in multiple copies in the regulatory regions of the viral genome. Activates or represses transcription depending on E2RE's position with regards to proximal promoter elements including the TATA-box. Repression occurs by sterically hindering the assembly of the transcription initiation complex. The polypeptide is Regulatory protein E2 (Human papillomavirus 19).